The primary structure comprises 602 residues: Bifunctional xylanase/deacetylase (602 aa).

A signal peptide spans 1–14 (MSATLLVPSMTVKA). Residues 17–211 (TIYNNKTGNQ…SSGSASVYKN (195 aa)) form the GH11 domain. Catalysis depends on glutamate 108, which acts as the Nucleophile. Glutamate 198 serves as the catalytic Proton donor. The tract at residues 216–240 (GGSSSSSGNQGGNQGGNTGNENAGN) is disordered. Residues 224 to 233 (NQGGNQGGNT) show a composition bias toward gly residues. In terms of domain architecture, CBM6 spans 249–366 (DKIQCETMTK…DAYLDYFNNS (118 aa)). The NodB homology domain occupies 402 to 578 (KLIALTFDDG…GLKNQGYTFV (177 aa)).

This sequence belongs to the glycosyl hydrolase 11 (cellulase G) family. Post-translationally, in the later growth phases, seems to undergo a proteolytic cleavage into a 30 kDa protein possessing xylanolytic activity.

It localises to the secreted. It carries out the reaction Endohydrolysis of (1-&gt;4)-beta-D-xylosidic linkages in xylans.. It functions in the pathway glycan degradation; xylan degradation. Functionally, endo-acting xylanase which specifically cleaves internal linkages on the xylan backbone, releasing xylooligosaccharides. Is also probably able, via its C-terminal domain, to remove acetyl groups from acetylated xylan, and thus it is probably capable of hydrolyzing acetylated xylan. This chain is Bifunctional xylanase/deacetylase (xyn11A), found in Pseudobutyrivibrio xylanivorans.